A 445-amino-acid chain; its full sequence is MSNRKYFGTDGIRGRVGDAPITPDFVLKLGWAAGKVLARHGSRKIIIGKDTRISGYMLESALEAGLAAAGLSALFTGPMPTPAVAYLTRTFRAEAGIVISASHNPFYDNGIKFFSIDGTKLPDAVEEAIEAEMEKEISCVDSAELGKASRIVDAAGRYIEFCKATFPNELSLSELKIVVDCANGATYHIAPNVLRELGANVIAIGCEPNGVNINAEVGATDVRALQARVLAEKADLGIAFDGDGDRVIMVDHEGNKVDGDQIMYIIAREGLRQGQLRGGAVGTLMSNMGLELALKQLGIPFARAKVGDRYVLEKMQEKGWRIGAENSGHVILLDKTTTGDGIVAGLQVLAAMARNHMSLHDLCSGMKMFPQILVNVRYTAGSGDPLEHESVKAVTAEVEAALGSRGRVLLRKSGTEPLIRVMVEGEDEEQVTEFAHRIADAVKAV.

The Phosphoserine intermediate role is filled by Ser-102. Residues Ser-102, Asp-241, Asp-243, and Asp-245 each coordinate Mg(2+). Phosphoserine is present on Ser-102.

The protein belongs to the phosphohexose mutase family. It depends on Mg(2+) as a cofactor. Activated by phosphorylation.

The enzyme catalyses alpha-D-glucosamine 1-phosphate = D-glucosamine 6-phosphate. Catalyzes the conversion of glucosamine-6-phosphate to glucosamine-1-phosphate. The chain is Phosphoglucosamine mutase from Escherichia fergusonii (strain ATCC 35469 / DSM 13698 / CCUG 18766 / IAM 14443 / JCM 21226 / LMG 7866 / NBRC 102419 / NCTC 12128 / CDC 0568-73).